The primary structure comprises 69 residues: MTKATDIRTKSADELNEQLLQLKKEQFNLRFQRASGQLENTARVREVRRDIARIKTILGERTRSAQPAS.

The protein belongs to the universal ribosomal protein uL29 family.

The protein is Large ribosomal subunit protein uL29 of Rhodospirillum centenum (strain ATCC 51521 / SW).